Consider the following 225-residue polypeptide: Nucleolar protein 6 (225 aa).

Residues 1 to 75 (MGSEEDKKLT…GGKGKNGKKG (75 aa)) are disordered. The segment covering 9-20 (LTKKQLKAQQFR) has biased composition (basic residues). The segment covering 21 to 42 (KSKEEKDQEKDVKKEQAPEGKR) has biased composition (basic and acidic residues). A Phosphoserine modification is found at S45. Residues 56-75 (KKKRKTRRGRGGKGKNGKKG) show a composition bias toward basic residues. Positions 78-155 (FIVFVGSLPR…KKINVELTVG (78 aa)) constitute an RRM domain. S160 carries the post-translational modification Phosphoserine. Positions 187 to 225 (NDGNQKKIAKTTATAAQTSGTDNKPVPAGIHPDRAKLLK) are disordered.

It belongs to the RRM NOP6 family.

It is found in the nucleus. The protein localises to the nucleolus. Functionally, predicted to be involved in rRNA processing. In Saccharomyces cerevisiae (strain ATCC 204508 / S288c) (Baker's yeast), this protein is Nucleolar protein 6 (NOP6).